Here is a 263-residue protein sequence, read N- to C-terminus: uncharacterized protein (263 aa).

ATP is bound at residue 31-38; sequence GPTGSGKT.

It belongs to the CbbQ/NirQ/NorQ/GpvN family.

This is an uncharacterized protein from Staphylococcus haemolyticus (strain JCSC1435).